A 699-amino-acid polypeptide reads, in one-letter code: Lutropin-choriogonadotropic hormone receptor (699 aa).

A signal peptide spans 1–26 (MKQRFSALQLLKLLLLLQPPLPRALR). The region spanning 27 to 66 (EALCPEPCNCVPDGALRCPGPTAGLTRLSLAYLPVKVIPS) is the LRRNT domain. Residues 27–363 (EALCPEPCNC…EDIMGYDFLR (337 aa)) lie on the Extracellular side of the membrane. 3 LRR repeats span residues 96–115 (NLLN…RYIE), 124–145 (RLKY…TKVF), and 149–171 (SNFI…AFQG). Asn-99 carries an N-linked (GlcNAc...) asparagine glycan. Residues Asn-174 and Asn-195 are each glycosylated (N-linked (GlcNAc...) asparagine). LRR repeat units lie at residues 175-196 (ESVT…AFNG), 198-220 (TLTS…AFRG), and 223-244 (GPKT…GLES). N-linked (GlcNAc...) asparagine glycans are attached at residues Asn-291, Asn-299, and Asn-313. Tyr-331 bears the Sulfotyrosine mark. Residues 364 to 385 (VLIWLINILAIMGNMTVLFVLL) form a helical membrane-spanning segment. Topologically, residues 386–395 (TSRYKLTVPR) are cytoplasmic. The chain crosses the membrane as a helical span at residues 396–416 (FLMCNLSFADFCMGLYLLLIA). Topologically, residues 417-439 (SVDSQTKGQYYNHAIDWQTGSGC) are extracellular. Cys-439 and Cys-514 are disulfide-bonded. The chain crosses the membrane as a helical span at residues 440–462 (STAGFFTVFASELSVYTLTVITL). Topologically, residues 463-482 (ERWHTITYAIHLDQKLRLRH) are cytoplasmic. The chain crosses the membrane as a helical span at residues 483–505 (AILIMLGGWLFSSLIAMLPLVGV). The Extracellular segment spans residues 506-525 (SNYMKVSICFPMDVETTLSQ). The helical transmembrane segment at 526–549 (VYILTILILNVVAFFIICACYIKI) threads the bilayer. Over 550-570 (YFAVRNPELMATNKDTKIAKK) the chain is Cytoplasmic. A helical membrane pass occupies residues 571 to 594 (MAILIFTDFTCMAPISFFAISAAF). Residues 595–605 (KVPLITVTNSK) are Extracellular-facing. Residues 606–627 (VLLVLFYPINSCANPFLYAIFT) form a helical membrane-spanning segment. The Cytoplasmic portion of the chain corresponds to 628-699 (KTFQRDFFLL…LLDKTRYTEC (72 aa)). 2 S-palmitoyl cysteine lipidation sites follow: Cys-643 and Cys-644.

This sequence belongs to the G-protein coupled receptor 1 family. FSH/LSH/TSH subfamily. Post-translationally, sulfated. Gonadal and thyroid cells.

The protein resides in the cell membrane. In terms of biological role, receptor for lutropin-choriogonadotropic hormone. The activity of this receptor is mediated by G proteins which activate adenylate cyclase. This is Lutropin-choriogonadotropic hormone receptor (LHCGR) from Homo sapiens (Human).